Reading from the N-terminus, the 266-residue chain is Enterotoxin type C-3 (266 aa).

Residues 1-27 (MYKRLFISRVILIFALILVISTPNVLA) form the signal peptide. Residues Asp-36 and Asp-110 each contribute to the Zn(2+) site. Residues Cys-120 and Cys-137 are joined by a disulfide bond. Zn(2+)-binding residues include His-145 and His-149.

This sequence belongs to the staphylococcal/streptococcal toxin family. Interacts with MHC class II molecules composed of alpha/HLA-DRA and beta/HLA-DRB1 chains. Interacts with host T-cell receptor/TCR beta variable chain TRBV8-2.

Its subcellular location is the secreted. Staphylococcal enterotoxin that activates the host immune system by binding as unprocessed molecules to major histocompatibility (MHC) complex class II and T-cell receptor (TCR) molecules. In turn, this ternary complex activates a large number of T-lymphocytes initiating a systemic release of pro-inflammatory cytokines. Also causes the intoxication staphylococcal food poisoning syndrome. This Staphylococcus aureus protein is Enterotoxin type C-3 (entC3).